We begin with the raw amino-acid sequence, 720 residues long: Phosphatase and actin regulator 4 (720 aa).

Residues 1–48 (MGQPRFSRPVHPAAAAEEVDHPPSDAGMGVDVLESGDTTPPTKRKSKF) are disordered. The RPEL 1 repeat unit spans residues 74 to 99 (EVLERKISMRKPREELVKRGVLLEDP). Disordered stretches follow at residues 294 to 417 (SGTG…GLPR), 454 to 568 (NDGF…DTLA), and 610 to 648 (RPTA…LSQR). Pro residues predominate over residues 346–368 (TYPPPSPSPPLPTHIPPEPPRMP). Over residues 393-405 (KDFRSLEVSKRTA) the composition is skewed to basic and acidic residues. Acidic residues-rich tracts occupy residues 481 to 494 (DDEE…EEEQ), 521 to 534 (EEQE…DSDS), and 542 to 551 (DDEEDEEEDE). RPEL repeat units follow at residues 601 to 626 (TTLI…QPKN) and 639 to 664 (RRLT…RFNE). Basic and acidic residues predominate over residues 626–636 (NEADRQAEKRE). Basic residues predominate over residues 637–646 (IKRRLTRKLS).

The protein belongs to the phosphatase and actin regulator family. In terms of assembly, binds PPP1CA and actin.

Its subcellular location is the cytoplasm. It is found in the cell projection. The protein resides in the lamellipodium. Regulator of protein phosphatase 1 (PP1) required for neural tube and optic fissure closure, and enteric neural crest cell (ENCCs) migration during development. Acts as an activator of PP1. During neural tube closure, localizes to the ventral neural tube and activates PP1, leading to down-regulate cell proliferation within cranial neural tissue and the neural retina. Also acts as a regulator of migration of enteric neural crest cells (ENCCs) by activating PP1, leading to repression of the integrin signaling through the RHO/ROCK pathway. The sequence is that of Phosphatase and actin regulator 4 (PHACTR4) from Gallus gallus (Chicken).